Here is a 241-residue protein sequence, read N- to C-terminus: DNA protection during starvation protein 2 (241 aa).

A disordered region spans residues Gly25–Thr65. Residues Val33 to Ser57 are compositionally biased toward polar residues. His100, Asp127, and Glu131 together coordinate Fe cation. Positions Thr220–Asp229 are enriched in polar residues. Residues Thr220–Arg241 are disordered.

The protein belongs to the Dps family. Homododecamer. The 12 subunits form a hollow sphere into which the mineral iron core of up to 500 Fe(3+) can be deposited.

The protein resides in the cytoplasm. It carries out the reaction 2 Fe(2+) + H2O2 + 2 H(+) = 2 Fe(3+) + 2 H2O. In terms of biological role, protects DNA from oxidative damage by sequestering intracellular Fe(2+) ion and storing it in the form of Fe(3+) oxyhydroxide mineral. One hydrogen peroxide oxidizes two Fe(2+) ions, which prevents hydroxyl radical production by the Fenton reaction. In Deinococcus radiodurans (strain ATCC 13939 / DSM 20539 / JCM 16871 / CCUG 27074 / LMG 4051 / NBRC 15346 / NCIMB 9279 / VKM B-1422 / R1), this protein is DNA protection during starvation protein 2 (dps2).